The chain runs to 215 residues: MFPQSLIDRILAELLAQDVAATDTDPALVPVGVSNRHVHLSRPDMDALFGPGASLTRMKAMKQPGQYAAAETVTLRGPKGDIGKVRVLGPLRKETQIEISVADGFTLGIKPPMRMSGKLDGSAGLTVIGPAGSVTKEAGVIVALRHIHMRPEDAVRLGVKTGDSVDVVVSGPRGGVMHNVTIRSDEVSATEMHIDVEEANAFGLQNDALVRVRKV.

33-35 contributes to the CoA binding site; that stretch reads VSN. Zn(2+)-binding residues include histidine 37 and histidine 39. Methionine 61, lysine 79, and arginine 86 together coordinate CoA. Arginine 92 contributes to the phosphate binding site. Zn(2+) is bound at residue glutamate 98. Phenylalanine 105 provides a ligand contact to CoA. The Zn(2+) site is built by histidine 146, histidine 148, and histidine 193. Asparagine 200 contacts CoA.

The protein belongs to the PduL family. Requires Zn(2+) as cofactor.

It is found in the bacterial microcompartment. The catalysed reaction is propanoyl-CoA + phosphate = propanoyl phosphate + CoA. It functions in the pathway polyol metabolism; 1,2-propanediol degradation. Its function is as follows. Involved in 1,2-propanediol (1,2-PD) utilization within the bacterial microcompartment (BMC) dedicated to 1,2-PD degradation by catalyzing the conversion of propanoyl-CoA to propanoyl-phosphate. The protein is Phosphate propanoyltransferase (pduL) of Rhodobacter capsulatus (strain ATCC BAA-309 / NBRC 16581 / SB1003).